The sequence spans 56 residues: MKVSLTLLATLCASLASAGVVITPVHQDQVVPAAQKVAGDCFFGVVTPQGCAPLRT.

Positions 1–18 are cleaved as a signal peptide; that stretch reads MKVSLTLLATLCASLASA.

This sequence belongs to the MC69 virulence factor family. As to quaternary structure, homodimer; disulfide-linked. Dimerization can possibly extend to multimerisation.

It is found in the secreted. Functionally, secreted protein required for appressorial penetration of intact host epidermal cells and for pathogenicit, but not for subsequent biotrophic and necrotrophic colonization of leaves. The protein is Secreted virulence factor CLU5a of Colletotrichum graminicola (strain M1.001 / M2 / FGSC 10212) (Maize anthracnose fungus).